Consider the following 1234-residue polypeptide: 1-phosphatidylinositol 4,5-bisphosphate phosphodiesterase beta-3 (1234 aa).

Residue A2 is modified to N-acetylalanine. Residues 315-466 enclose the PI-PLC X-box domain; that stretch reads MDMTQPLSAY…LMGRILVKNK (152 aa). Catalysis depends on residues H330 and H377. Residues 465–586 are disordered; that stretch reads NKKRHRPSTG…GTASSEVNAT (122 aa). Phosphoserine occurs at positions 472, 488, 493, and 535. A compositionally biased stretch (low complexity) spans 486–513; sequence EQSNSALSESSAATEPSSPQLGSPSSDS. Residues 554-566 are compositionally biased toward acidic residues; the sequence is REDEEEDEEEEET. Over residues 577–586 the composition is skewed to polar residues; sequence GTASSEVNAT. The region spanning 589-705 is the PI-PLC Y-box domain; it reads MSTLVNYVEP…GYLLKPEFMR (117 aa). The 129-residue stretch at 706-834 folds into the C2 domain; sequence RPDKSFDPFT…RNEANQPLCL (129 aa). Polar residues predominate over residues 886–907; sequence ASTEMCQETPSQQQGSQLSSNP. The tract at residues 886–936 is disordered; it reads ASTEMCQETPSQQQGSQLSSNPVPNPLDDSPRWPPGPTTSPTSTSLSSPGQ. Low complexity predominate over residues 924 to 934; the sequence is TSPTSTSLSSP. 2 positions are modified to phosphoserine: S925 and S1105. Residues 1196-1234 form a disordered region; sequence SEGLGDGPLVACASNGHAAGSGGHQSGADSESQEENTQL. Positions 1231 to 1234 are interaction with SHANK2; sequence NTQL.

Interacts with LPAR2. Interacts with SHANK2. It depends on Ca(2+) as a cofactor. In terms of tissue distribution, expressed in parotid gland, brain, liver, uterus, lung, heart, adrenal gland, and ovary. Not detected in spleen, pancreas, intestine, thymus or kidney.

It localises to the cytoplasm. It is found in the membrane. Its subcellular location is the nucleus. It carries out the reaction a 1,2-diacyl-sn-glycero-3-phospho-(1D-myo-inositol-4,5-bisphosphate) + H2O = 1D-myo-inositol 1,4,5-trisphosphate + a 1,2-diacyl-sn-glycerol + H(+). The enzyme catalyses a 1,2-diacyl-sn-glycero-3-phospho-(1D-myo-inositol) + H2O = 1D-myo-inositol 1-phosphate + a 1,2-diacyl-sn-glycerol + H(+). With respect to regulation, activated by G(q)/G(11) G alpha proteins in response to ligand-binding to G protein-coupled receptors. Catalyzes the production of the second messenger molecules diacylglycerol (DAG) and inositol 1,4,5-trisphosphate (IP3). Key transducer of G protein-coupled receptor signaling: activated by G(q)/G(11) G alpha proteins downstream of G protein-coupled receptors activation. In neutrophils, participates in a phospholipase C-activating N-formyl peptide-activated GPCR (G protein-coupled receptor) signaling pathway by promoting RASGRP4 activation by DAG, to promote neutrophil functional responses. This is 1-phosphatidylinositol 4,5-bisphosphate phosphodiesterase beta-3 from Rattus norvegicus (Rat).